An 840-amino-acid chain; its full sequence is DNA mismatch repair protein MutS (840 aa).

601 to 608 provides a ligand contact to ATP; that stretch reads GPNMSGKS.

Belongs to the DNA mismatch repair MutS family.

In terms of biological role, this protein is involved in the repair of mismatches in DNA. It is possible that it carries out the mismatch recognition step. This protein has a weak ATPase activity. This Lactococcus lactis subsp. cremoris (strain SK11) protein is DNA mismatch repair protein MutS.